Here is a 165-residue protein sequence, read N- to C-terminus: MADEHSFDISASVDIMEVKNALETAKKEVSSRFDFKGLKAQIELNEKEKTITLISSSDSKIDALKDIVLSKLIKREIPPVAITELKRESAGGANTKCSLKLNDTLDSLNAKKITKVIKDEKLKVNASIRGEEVRVTSKSIDELQNVIKLVKDLNLELPLSFKNLK.

It belongs to the YajQ family.

Functionally, nucleotide-binding protein. The chain is Nucleotide-binding protein CFF8240_1664 from Campylobacter fetus subsp. fetus (strain 82-40).